Consider the following 581-residue polypeptide: Cytosolic Fe-S cluster assembly factor nar-1 (581 aa).

Positions 20, 68, 71, 74, 215, 270, 457, and 461 each coordinate [4Fe-4S] cluster.

The protein belongs to the NARF family.

Its function is as follows. Component of the cytosolic Fe/S protein assembly machinery. Required for maturation of extramitochondrial Fe/S proteins. May play a role in the transfer of pre-assembled Fe/S clusters to target apoproteins. The chain is Cytosolic Fe-S cluster assembly factor nar-1 (nar-1) from Neurospora crassa (strain ATCC 24698 / 74-OR23-1A / CBS 708.71 / DSM 1257 / FGSC 987).